The sequence spans 153 residues: Nascent polypeptide-associated complex subunit beta (153 aa).

Disordered stretches follow at residues 1–40 (MSDVQERLKKLGLGARTGTGKGTPRRKVKRAPARSGADDK) and 126–153 (LQKEKGEDDDEIPDLVEGENFEGEPKVE). Residues 23 to 32 (TPRRKVKRAP) are compositionally biased toward basic residues. Positions 36 to 101 (GADDKKLQLA…GEDKELTELV (66 aa)) constitute an NAC-A/B domain. Acidic residues predominate over residues 132–147 (EDDDEIPDLVEGENFE).

Belongs to the NAC-beta family. Part of the nascent polypeptide-associated complex (NAC), consisting of EGD2 and EGD1. NAC associates with ribosomes via EGD1.

The protein localises to the cytoplasm. Its subcellular location is the nucleus. Functionally, component of the nascent polypeptide-associated complex (NAC), a dynamic component of the ribosomal exit tunnel, protecting the emerging polypeptides from interaction with other cytoplasmic proteins to ensure appropriate nascent protein targeting. The NAC complex also promotes mitochondrial protein import by enhancing productive ribosome interactions with the outer mitochondrial membrane and blocks the inappropriate interaction of ribosomes translating non-secretory nascent polypeptides with translocation sites in the membrane of the endoplasmic reticulum. EGD1 may act as a transcription factor that exert a negative effect on the expression of several genes that are transcribed by RNA polymerase II. This is Nascent polypeptide-associated complex subunit beta (EGD1) from Gibberella zeae (strain ATCC MYA-4620 / CBS 123657 / FGSC 9075 / NRRL 31084 / PH-1) (Wheat head blight fungus).